A 99-amino-acid chain; its full sequence is RNA-binding protein HI_1333 (99 aa).

One can recognise a CRM domain in the interval 2-98 (TTLSTKQKQF…SEEAKIQLPR (97 aa)).

This Haemophilus influenzae (strain ATCC 51907 / DSM 11121 / KW20 / Rd) protein is RNA-binding protein HI_1333.